Here is an 82-residue protein sequence, read N- to C-terminus: Small ribosomal subunit protein bS16 (82 aa).

The protein belongs to the bacterial ribosomal protein bS16 family.

The sequence is that of Small ribosomal subunit protein bS16 from Aeromonas hydrophila subsp. hydrophila (strain ATCC 7966 / DSM 30187 / BCRC 13018 / CCUG 14551 / JCM 1027 / KCTC 2358 / NCIMB 9240 / NCTC 8049).